We begin with the raw amino-acid sequence, 66 residues long: Large ribosomal subunit protein bL35 (66 aa).

Composition is skewed to basic residues over residues 1–16 and 31–45; these read MPKQ…RFKR and HRFH…RQLR. The interval 1–52 is disordered; sequence MPKQKTHRASAKRFKRTGNGGLKRSNAYTSHRFHGKTKKQRRQLRKASMVSA.

The protein belongs to the bacterial ribosomal protein bL35 family.

This Ligilactobacillus salivarius (strain UCC118) (Lactobacillus salivarius) protein is Large ribosomal subunit protein bL35.